The chain runs to 639 residues: Sperm-associated antigen 16 protein (639 aa).

Residues 146 to 218 are a coiled coil; it reads DVYSQVMLLE…GLKLHYASYE (73 aa). Positions 280–333 are disordered; that stretch reads RESGDRAGHSCEKENSSEGPTQKSLREAREEVGYKSKLKNEKKDSEFPVDMQPD. Composition is skewed to basic and acidic residues over residues 281-295 and 303-325; these read ESGD…KENS and SLRE…KDSE. 7 WD repeats span residues 358-397, 400-439, 442-481, 484-523, 526-565, 568-608, and 609-639; these read LHEL…VLLT, GHTD…CTLT, GHNH…CRYT, GHTD…CEQS, GHMH…PIVS, VGPS…HKLV, and GHES…RLWI.

As to quaternary structure, interacts with SPAG6 and STK36. In terms of processing, phosphorylated by TSSK2. As to expression, expressed in testis.

The protein localises to the cytoplasm. It is found in the cytoskeleton. The protein resides in the cilium axoneme. Its subcellular location is the flagellum axoneme. It localises to the cell projection. The protein localises to the cilium. It is found in the flagellum. Necessary for sperm flagellar function. Plays a role in motile ciliogenesis. May help to recruit STK36 to the cilium or apical surface of the cell to initiate subsequent steps of construction of the central pair apparatus of motile cilia. This chain is Sperm-associated antigen 16 protein (Spag16), found in Mus musculus (Mouse).